Here is a 707-residue protein sequence, read N- to C-terminus: Terpene cyclase/mutase atnI (707 aa).

The span at 1–20 (MGQHIASSESSTNGHVSLET) shows a compositional bias: polar residues. Residues 1–22 (MGQHIASSESSTNGHVSLETNG) form a disordered region. 4 PFTB repeats span residues 130–173 (AVEI…RLLG), 494–535 (LRDA…VGKT), 571–608 (TAQGLGFIKQSQKPDGGWYGAWGVCFTYAGMFALETLA), and 620–661 (SRRG…VQTA).

The protein belongs to the terpene cyclase/mutase family.

Its pathway is secondary metabolite biosynthesis; terpenoid biosynthesis. Functionally, terpene cyclase/mutase; part of the gene cluster that mediates the biosynthesis of the meroterpenoids arthripenoids. The pathway begins with the HR-PKS atnH that catalyzes two chain-extension steps to form a reduced triketide, which then primes the SAT domain in the NR-PKS atnG to initiate three more cycles of extension to give a linear hexaketide corresponding to the polyketide part of arthripenoids. The FAD-dependent monooxygenase atnJ then performs an oxidative decarboxylation at C11 of the atnH/atnG product, via an electrophilic aromatic hydroxylation with concomitant ipso-decarboxylation. The membrane-bound polyprenyl transferase atnF then introduces a farnesyl group before the FAD-dependent monooxygenase atnK functions as the first epoxidase on terminal C12'-C13' olefin, followed by a second epoxidation on C7'-C8' catalyzed by atnA. The terpene cyclase/mutase atnI then initiates the sequential tricyclic ring formation through protonation of the terminal epoxide and catalyzes the regioselective and stereoselective 6/6/6-tricyclic ring formation. The cytochrome P450 monooxygenase atnM is responsible for hydroxylating both C1' and C10'. The next steps may involve ketoreduction and acetyl transfer by the ketoreductase atnB and the acetyltransferase atnC, and lead to the production of arthripenoid B, the final biosynthetic product of the atn cluster. The hydroquinone moiety in arthripenoid B is prone to undergo spontaneous oxidation to afford a benzoquinone compound, a key intermediate for generating structure diversity. For instance, addition of a cysteine followed by ring contraction gives arthripenoid A, tautomerization gives the main product arthripenoid C, addition of a molecular of water or amine affords arthripenoid D or E, respectively, and loss of one water forms arthripenoid F. The protein is Terpene cyclase/mutase atnI of Arthrinium sp.